Here is a 475-residue protein sequence, read N- to C-terminus: Sulfate adenylyltransferase subunit 1 (475 aa).

A tr-type G domain is found at 25–239; that stretch reads KSLLRFLTCG…EVLETVEIQR (215 aa). The interval 34 to 41 is G1; it reads GSVDDGKS. Residue 34–41 participates in GTP binding; the sequence is GSVDDGKS. The segment at 92 to 96 is G2; sequence GITID. Positions 113 to 116 are G3; the sequence is DTPG. GTP is bound by residues 113–117 and 168–171; these read DTPGH and NKMD. The segment at 168–171 is G4; it reads NKMD. A G5 region spans residues 206-208; that stretch reads SAL.

It belongs to the TRAFAC class translation factor GTPase superfamily. Classic translation factor GTPase family. CysN/NodQ subfamily. As to quaternary structure, heterodimer composed of CysD, the smaller subunit, and CysN.

It carries out the reaction sulfate + ATP + H(+) = adenosine 5'-phosphosulfate + diphosphate. It functions in the pathway sulfur metabolism; hydrogen sulfide biosynthesis; sulfite from sulfate: step 1/3. Functionally, with CysD forms the ATP sulfurylase (ATPS) that catalyzes the adenylation of sulfate producing adenosine 5'-phosphosulfate (APS) and diphosphate, the first enzymatic step in sulfur assimilation pathway. APS synthesis involves the formation of a high-energy phosphoric-sulfuric acid anhydride bond driven by GTP hydrolysis by CysN coupled to ATP hydrolysis by CysD. This is Sulfate adenylyltransferase subunit 1 from Escherichia coli (strain UTI89 / UPEC).